Reading from the N-terminus, the 1290-residue chain is Period circadian protein homolog 1 (1290 aa).

Positions 1 to 134 are disordered; it reads MSGPLEGADG…SSEQSARART (134 aa). The tract at residues 1–151 is interaction with BTRC; it reads MSGPLEGADG…LRELKLRLPP (151 aa). Residues 25-38 show a composition bias toward pro residues; that stretch reads VPSPGPPQHRPCPG. 2 stretches are compositionally biased toward low complexity: residues 48–57 and 64–115; these read NSNGSSGNES and GASQ…ASSE. Polar residues predominate over residues 116–132; sequence QDNPSTSGCSSEQSARA. The residue at position 121 (Thr-121) is a Phosphothreonine; by CSNK1E. A phosphoserine; by CSNK1E mark is found at Ser-122 and Ser-126. The Nuclear export signal 1 motif lies at 138 to 147; that stretch reads LMTALRELKL. PAS domains lie at 208-275 and 348-414; these read ITSE…PSRL and YEAP…KILQ. A PAC domain is found at 422–465; the sequence is HSPIRFCARNGEYVTMDTSWAGFVHPWSRKVAFVLGRHKVRTAP. A Nuclear export signal 2 motif is present at residues 489 to 498; that stretch reads LSEQIHRLLL. 2 disordered regions span residues 508 to 544 and 646 to 698; these read GLCG…PAPV and TTKR…KEPV. Low complexity-rich tracts occupy residues 517 to 533 and 652 to 662; these read SPGP…SNGG and ASSSSYTTSSA. Residues 596–815 are required for phosphorylation by CSNK1E; sequence ELEAGSAPVQ…GLDSSSTAPS (220 aa). Phosphoserine occurs at positions 661, 663, and 704. Disordered regions lie at residues 749–772, 805–874, and 938–977; these read GLAP…APDA, RGLD…PPAT, and ALQT…FNSR. Over residues 751–769 the composition is skewed to pro residues; that stretch reads APGPAPSPAPSPTVAPDPA. Ser-815 is modified (phosphoserine). The short motif at 827 to 843 is the Nuclear localization signal element; sequence APPSRRHHCRSKAKRSR. A compositionally biased stretch (basic residues) spans 830 to 847; it reads SRRHHCRSKAKRSRHHQN. The segment covering 860-874 has biased composition (pro residues); sequence SPVPPSTPWPTPPAT. A compositionally biased stretch (low complexity) spans 950–961; sequence ASHSPSPSLPAL. Phosphoserine is present on residues Ser-979 and Ser-980. The Nuclear export signal 3 signature appears at 982–989; sequence LQLNLLQL. Residues 996 to 1037 form a disordered region; sequence EGAAVAGGPGSSAGPPPPSAEAAEPEARLAEVTESSNQDALS. The LXXLL motif lies at 1043 to 1047; that stretch reads LELLL. Residues 1051–1062 show a composition bias toward low complexity; the sequence is SRSGTGSAASGS. Disordered stretches follow at residues 1051–1098 and 1207–1290; these read SRSG…SKYF and SSTQ…NCTS. A compositionally biased stretch (gly residues) spans 1063–1077; the sequence is LGSGLGSGSGSGSHE. Residues 1078-1095 are compositionally biased toward low complexity; it reads GGSTSASITRSSQSSHTS. Positions 1149 to 1290 are CRY binding domain; that stretch reads SRDMTSVLKQ…ALPTAGNCTS (142 aa). Residues 1236–1248 show a composition bias toward gly residues; sequence GEQGSSGGGSGEG.

As to quaternary structure, homodimer. Component of the circadian core oscillator, which includes the CRY proteins, CLOCK or NPAS2, BMAL1 or BMAL2, CSNK1D and/or CSNK1E, TIMELESS, and the PER proteins. Interacts directly with TIMELESS, PER2, PER3, CRY1 and CRY2. Interacts with BMAL1 and CLOCK. Interacts with GPRASP1. Interacts (phosphorylated) with BTRC and FBXW11; the interactions trigger proteasomal degradation. Interacts with NONO, WDR5 and SFPQ. Interacts with USP2. Interacts with HNF4A. In terms of processing, phosphorylated on serine residues by CSNK1D, CSNK1E and probably also by CSNK1G2. Phosphorylation by CSNK1D or CSNK1E promotes nuclear location of PER proteins as well as ubiquitination and subsequent degradation. May be dephosphorylated by PP1. Post-translationally, ubiquitinated; requires phosphorylation by CSNK1E and interaction with BTRC and FBXW11. Deubiquitinated by USP2. Widely expressed. Expressed in hair follicles (at protein level). Found in heart, brain, placenta, lung, liver, skeletal muscle, pancreas, kidney, spleen, thymus, prostate, testis, ovary and small intestine. Highest level in skeletal muscle.

Its subcellular location is the nucleus. It localises to the cytoplasm. Functionally, transcriptional repressor which forms a core component of the circadian clock. The circadian clock, an internal time-keeping system, regulates various physiological processes through the generation of approximately 24 hour circadian rhythms in gene expression, which are translated into rhythms in metabolism and behavior. It is derived from the Latin roots 'circa' (about) and 'diem' (day) and acts as an important regulator of a wide array of physiological functions including metabolism, sleep, body temperature, blood pressure, endocrine, immune, cardiovascular, and renal function. Consists of two major components: the central clock, residing in the suprachiasmatic nucleus (SCN) of the brain, and the peripheral clocks that are present in nearly every tissue and organ system. Both the central and peripheral clocks can be reset by environmental cues, also known as Zeitgebers (German for 'timegivers'). The predominant Zeitgeber for the central clock is light, which is sensed by retina and signals directly to the SCN. The central clock entrains the peripheral clocks through neuronal and hormonal signals, body temperature and feeding-related cues, aligning all clocks with the external light/dark cycle. Circadian rhythms allow an organism to achieve temporal homeostasis with its environment at the molecular level by regulating gene expression to create a peak of protein expression once every 24 hours to control when a particular physiological process is most active with respect to the solar day. Transcription and translation of core clock components (CLOCK, NPAS2, BMAL1, BMAL2, PER1, PER2, PER3, CRY1 and CRY2) plays a critical role in rhythm generation, whereas delays imposed by post-translational modifications (PTMs) are important for determining the period (tau) of the rhythms (tau refers to the period of a rhythm and is the length, in time, of one complete cycle). A diurnal rhythm is synchronized with the day/night cycle, while the ultradian and infradian rhythms have a period shorter and longer than 24 hours, respectively. Disruptions in the circadian rhythms contribute to the pathology of cardiovascular diseases, cancer, metabolic syndromes and aging. A transcription/translation feedback loop (TTFL) forms the core of the molecular circadian clock mechanism. Transcription factors, CLOCK or NPAS2 and BMAL1 or BMAL2, form the positive limb of the feedback loop, act in the form of a heterodimer and activate the transcription of core clock genes and clock-controlled genes (involved in key metabolic processes), harboring E-box elements (5'-CACGTG-3') within their promoters. The core clock genes: PER1/2/3 and CRY1/2 which are transcriptional repressors form the negative limb of the feedback loop and interact with the CLOCK|NPAS2-BMAL1|BMAL2 heterodimer inhibiting its activity and thereby negatively regulating their own expression. This heterodimer also activates nuclear receptors NR1D1/2 and RORA/B/G, which form a second feedback loop and which activate and repress BMAL1 transcription, respectively. Regulates circadian target genes expression at post-transcriptional levels, but may not be required for the repression at transcriptional level. Controls PER2 protein decay. Represses CRY2 preventing its repression on CLOCK/BMAL1 target genes such as FXYD5 and SCNN1A in kidney and PPARA in liver. Besides its involvement in the maintenance of the circadian clock, has an important function in the regulation of several processes. Participates in the repression of glucocorticoid receptor NR3C1/GR-induced transcriptional activity by reducing the association of NR3C1/GR to glucocorticoid response elements (GREs) by BMAL1:CLOCK. Plays a role in the modulation of the neuroinflammatory state via the regulation of inflammatory mediators release, such as CCL2 and IL6. In spinal astrocytes, negatively regulates the MAPK14/p38 and MAPK8/JNK MAPK cascades as well as the subsequent activation of NFkappaB. Coordinately regulates the expression of multiple genes that are involved in the regulation of renal sodium reabsorption. Can act as gene expression activator in a gene and tissue specific manner, in kidney enhances WNK1 and SLC12A3 expression in collaboration with CLOCK. Modulates hair follicle cycling. Represses the CLOCK-BMAL1 induced transcription of BHLHE40/DEC1. This is Period circadian protein homolog 1 (PER1) from Homo sapiens (Human).